The following is a 240-amino-acid chain: Serine protease SplB (240 aa).

Residues 1–36 (MNKNVVIKSLAALTILTSVTGIGITLVEEVQQTAKA) form the signal peptide. Residues histidine 75, aspartate 113, and serine 193 each act as charge relay system in the active site.

This sequence belongs to the peptidase S1B family.

The protein resides in the secreted. Its function is as follows. Serine protease that cleaves specifically after the sequence Trp-Glu-Leu-Gln. This Staphylococcus aureus (strain MW2) protein is Serine protease SplB (splB).